A 142-amino-acid chain; its full sequence is Hemoglobin subunit alpha (142 aa).

Positions 2–142 (VLSPADKTNV…VSTVLTSKYR (141 aa)) constitute a Globin domain. Ser4 bears the Phosphoserine mark. The residue at position 8 (Lys8) is an N6-succinyllysine. Phosphothreonine is present on Thr9. Lys12 bears the N6-succinyllysine mark. Position 17 is an N6-acetyllysine; alternate (Lys17). Lys17 is modified (N6-succinyllysine; alternate). Tyr25 bears the Phosphotyrosine mark. Phosphoserine is present on Ser36. Lys41 carries the post-translational modification N6-succinyllysine. Ser50 carries the post-translational modification Phosphoserine. His59 serves as a coordination point for O2. His88 lines the heme b pocket. Ser103 is subject to Phosphoserine. Thr109 carries the post-translational modification Phosphothreonine. At Ser125 the chain carries Phosphoserine. A phosphothreonine mark is found at Thr135 and Thr138. The residue at position 139 (Ser139) is a Phosphoserine.

The protein belongs to the globin family. In terms of assembly, heterotetramer of two alpha chains and two beta chains. Red blood cells.

Functionally, involved in oxygen transport from the lung to the various peripheral tissues. In terms of biological role, hemopressin acts as an antagonist peptide of the cannabinoid receptor CNR1. Hemopressin-binding efficiently blocks cannabinoid receptor CNR1 and subsequent signaling. The sequence is that of Hemoglobin subunit alpha (HBA) from Ailurus fulgens (Himalayan red panda).